The chain runs to 270 residues: Phosphatidylglycerol--prolipoprotein diacylglyceryl transferase (270 aa).

The next 7 membrane-spanning stretches (helical) occupy residues 14-34, 60-80, 103-123, 133-153, 181-201, 209-229, and 235-255; these read VAFTLFGFSVHWYGIMYILAL, YFFWVEIGVILGARLGYIAIY, FVGIRGMSYHGAVVGFLLATI, LWQLLDLCALCIPFGYIFGRI, PSQLYEAALEGLAVFLILFFY, GELIALYAVLYTLARFVCEFF, and GIGFIIFGLSMGQILSILMFF. Arginine 152 serves as a coordination point for a 1,2-diacyl-sn-glycero-3-phospho-(1'-sn-glycerol).

This sequence belongs to the Lgt family.

The protein localises to the cell inner membrane. It catalyses the reaction L-cysteinyl-[prolipoprotein] + a 1,2-diacyl-sn-glycero-3-phospho-(1'-sn-glycerol) = an S-1,2-diacyl-sn-glyceryl-L-cysteinyl-[prolipoprotein] + sn-glycerol 1-phosphate + H(+). The protein operates within protein modification; lipoprotein biosynthesis (diacylglyceryl transfer). Functionally, catalyzes the transfer of the diacylglyceryl group from phosphatidylglycerol to the sulfhydryl group of the N-terminal cysteine of a prolipoprotein, the first step in the formation of mature lipoproteins. The protein is Phosphatidylglycerol--prolipoprotein diacylglyceryl transferase of Campylobacter curvus (strain 525.92).